We begin with the raw amino-acid sequence, 308 residues long: NADH-cytochrome b5 reductase 1 (308 aa).

The chain crosses the membrane as a helical span at residues 29 to 49; sequence VASSPAFLVAAAAIVIAAAFY. An FAD-binding FR-type domain is found at 64-167; it reads SIWKEFPLQK…KGPKGNFKYT (104 aa). FAD is bound by residues 147–162 and 173–205; these read ASLKIGDTLRVKGPKG and HLGMIAGGTGLAPMIQIVRAILQNPPDRTNITL.

The protein belongs to the flavoprotein pyridine nucleotide cytochrome reductase family. Monomer. Component of the 2-(3-amino-3-carboxypropyl)histidine synthase complex composed of DPH1, DPH2, DPH3 and a NADH-dependent reductase, predominantly MCR1.1. FAD serves as cofactor.

It is found in the mitochondrion outer membrane. The catalysed reaction is 2 Fe(III)-[cytochrome b5] + NADH = 2 Fe(II)-[cytochrome b5] + NAD(+) + H(+). The enzyme catalyses 2 Fe(3+)-[Dph3] + NADH = 2 Fe(2+)-[Dph3] + NAD(+) + H(+). Its pathway is protein modification; peptidyl-diphthamide biosynthesis. Its function is as follows. NADH-dependent reductase for DPH3 and cytochrome b5. Required for the first step of diphthamide biosynthesis, a post-translational modification of histidine which occurs in elongation factor 2. DPH1 and DPH2 transfer a 3-amino-3-carboxypropyl (ACP) group from S-adenosyl-L-methionine (SAM) to a histidine residue, the reaction is assisted by a reduction system comprising DPH3 and a NADH-dependent reductase, predominantly MCR1.1. By reducing DPH3, also involved in the formation of the tRNA wobble base modification mcm5s 2U (5-methoxycarbonylmethyl-2-thiouridine), mediated by the elongator complex. The cytochrome b5/NADH cytochrome b5 reductase electron transfer system supports the catalytic activity of several sterol biosynthetic enzymes. The protein is NADH-cytochrome b5 reductase 1 (MCR1.1) of Laccaria bicolor (strain S238N-H82 / ATCC MYA-4686) (Bicoloured deceiver).